The primary structure comprises 142 residues: Large ribosomal subunit protein uL16 (142 aa).

This sequence belongs to the universal ribosomal protein uL16 family. As to quaternary structure, part of the 50S ribosomal subunit.

Functionally, binds 23S rRNA and is also seen to make contacts with the A and possibly P site tRNAs. This Thermotoga sp. (strain RQ2) protein is Large ribosomal subunit protein uL16.